Here is a 299-residue protein sequence, read N- to C-terminus: tRNA dimethylallyltransferase (299 aa).

Position 13-20 (13-20 (GPTASGKT)) interacts with ATP. 15–20 (TASGKT) serves as a coordination point for substrate. Positions 38-41 (DSRQ) are interaction with substrate tRNA.

Belongs to the IPP transferase family. Monomer. The cofactor is Mg(2+).

It carries out the reaction adenosine(37) in tRNA + dimethylallyl diphosphate = N(6)-dimethylallyladenosine(37) in tRNA + diphosphate. In terms of biological role, catalyzes the transfer of a dimethylallyl group onto the adenine at position 37 in tRNAs that read codons beginning with uridine, leading to the formation of N6-(dimethylallyl)adenosine (i(6)A). In Prochlorococcus marinus (strain AS9601), this protein is tRNA dimethylallyltransferase.